The chain runs to 228 residues: Sodium channel regulatory subunit beta-4 (228 aa).

The signal sequence occupies residues 1–30; it reads MSRAGNRGNTQARWLGTGLLGLFLLPMYLS. Residues 31–148 enclose the Ig-like C2-type domain; it reads LEVSVGKATT…KDLNNSATIF (118 aa). Over 31–161 the chain is Extracellular; sequence LEVSVGKATT…VDKLEKVDNT (131 aa). N-linked (GlcNAc...) asparagine glycosylation is found at Asn45, Asn71, Asn113, and Asn142. Cys53 and Cys131 are oxidised to a cystine. A helical membrane pass occupies residues 162–182; that stretch reads VTLIILAVVGGVIGLLVCILL. Residues 183 to 228 lie on the Cytoplasmic side of the membrane; the sequence is LKKLITFILKKTREKKKECLVSSSGNDNTENGLPGSKAEEKPPTKV. The disordered stretch occupies residues 199-228; sequence KECLVSSSGNDNTENGLPGSKAEEKPPTKV. Over residues 203 to 213 the composition is skewed to polar residues; it reads VSSSGNDNTEN. Over residues 219–228 the composition is skewed to basic and acidic residues; sequence KAEEKPPTKV.

Belongs to the sodium channel auxiliary subunit SCN4B (TC 8.A.17) family. In terms of assembly, a voltage-gated sodium (Nav) channel consists of an ion-conducting pore-forming alpha subunit functional on its own that is regulated by one or more beta subunits. The beta subunit SCN4B is disulfide-linked to the pore-forming alpha subunit. Interacts with SCN1A; regulatory subunit of SCN1A/Nav1.1. Interacts with SCN2A; regulatory subunit of SCN2A/Nav1.2. Contains an interchain disulfide bond with SCN2A.

It is found in the cell membrane. Functionally, regulatory subunit of multiple voltage-gated sodium (Nav) channels directly mediating the depolarization of excitable membranes. Navs, also called VGSCs (voltage-gated sodium channels) or VDSCs (voltage-dependent sodium channels), operate by switching between closed and open conformations depending on the voltage difference across the membrane. In the open conformation they allow Na(+) ions to selectively pass through the pore, along their electrochemical gradient. The influx of Na+ ions provokes membrane depolarization, initiating the propagation of electrical signals throughout cells and tissues. The accessory beta subunits participate in localization and functional modulation of the Nav channels. Modulates the activity of SCN1A/Nav1.1. Modulates the activity of SCN2A/Nav1.2. The sequence is that of Sodium channel regulatory subunit beta-4 from Mus musculus (Mouse).